Reading from the N-terminus, the 558-residue chain is Dihydroxy-acid dehydratase (558 aa).

Residue Asp-78 coordinates Mg(2+). Cys-119 is a binding site for [2Fe-2S] cluster. Mg(2+) is bound by residues Asp-120 and Lys-121. Lys-121 carries the post-translational modification N6-carboxylysine. Residue Cys-192 participates in [2Fe-2S] cluster binding. Glu-445 is a Mg(2+) binding site. The active-site Proton acceptor is Ser-471.

It belongs to the IlvD/Edd family. In terms of assembly, homodimer. The cofactor is [2Fe-2S] cluster. Mg(2+) is required as a cofactor.

The catalysed reaction is (2R)-2,3-dihydroxy-3-methylbutanoate = 3-methyl-2-oxobutanoate + H2O. The enzyme catalyses (2R,3R)-2,3-dihydroxy-3-methylpentanoate = (S)-3-methyl-2-oxopentanoate + H2O. The protein operates within amino-acid biosynthesis; L-isoleucine biosynthesis; L-isoleucine from 2-oxobutanoate: step 3/4. It participates in amino-acid biosynthesis; L-valine biosynthesis; L-valine from pyruvate: step 3/4. Functions in the biosynthesis of branched-chain amino acids. Catalyzes the dehydration of (2R,3R)-2,3-dihydroxy-3-methylpentanoate (2,3-dihydroxy-3-methylvalerate) into 2-oxo-3-methylpentanoate (2-oxo-3-methylvalerate) and of (2R)-2,3-dihydroxy-3-methylbutanoate (2,3-dihydroxyisovalerate) into 2-oxo-3-methylbutanoate (2-oxoisovalerate), the penultimate precursor to L-isoleucine and L-valine, respectively. The chain is Dihydroxy-acid dehydratase from Akkermansia muciniphila (strain ATCC BAA-835 / DSM 22959 / JCM 33894 / BCRC 81048 / CCUG 64013 / CIP 107961 / Muc).